The primary structure comprises 261 residues: Small ribosomal subunit protein eS4 (261 aa).

The 59-residue stretch at 42-100 (LPLILILRNRLKYALTYREVVSILMQRHILVDGKIHFCIRLSDVVSIPKTNENFRLLYD) folds into the S4 RNA-binding domain.

Belongs to the eukaryotic ribosomal protein eS4 family.

It localises to the cytoplasm. This is Small ribosomal subunit protein eS4 (RPS4) from Prunus armeniaca (Apricot).